The following is a 395-amino-acid chain: Zinc finger protein HD1 (395 aa).

The B box-type 1; atypical zinc finger occupies 30 to 72 (PWARPCDGCRAAPSVVYCRADAAYLCASCDARVHAANRVASRH). Positions 35, 38, 58, 63, 78, 81, 101, and 106 each coordinate Zn(2+). Residues 73 to 117 (ERVRVCEACERAPAALACRADAAALCVACDVQVHSANPLPAITIP) form a B box-type 2; atypical zinc finger. Disordered stretches follow at residues 147–176 (SKDS…SNNG) and 208–228 (GMHE…EFAE). Low complexity predominate over residues 152 to 175 (NNNNNNNNNDNDNNDNNNSNSSNN). Residues 326-368 (REARVLRYREKKKARKFEKTIRYETRKAYAEARPRIKGRFAKR) form the CCT domain.

It belongs to the CONSTANS family. As to quaternary structure, interacts with HAL3 in the dark. Post-translationally, phosphorylated by OSK4 in the presence of HDR1.

The protein resides in the nucleus. In terms of biological role, probable transcription factor involved in the regulation of flower development. Required for the promotion of flowering under short day (SD) conditions and the suppression of flowering under long day (LD) conditions. Positively regulates the floral activator HEADING DATE 3a (HD3A) under SD and negatively under LD conditions. The polypeptide is Zinc finger protein HD1 (Oryza sativa subsp. japonica (Rice)).